We begin with the raw amino-acid sequence, 289 residues long: Inorganic pyrophosphatase (289 aa).

At Ser2 the chain carries N-acetylserine. Residue Lys57 is modified to N6-acetyllysine. Residues Asp116, Asp121, and Asp153 each coordinate Mg(2+). Lys228 is modified (N6-acetyllysine). Ser250 is modified (phosphoserine).

This sequence belongs to the PPase family. As to quaternary structure, homodimer. The cofactor is Mg(2+).

It is found in the cytoplasm. The catalysed reaction is diphosphate + H2O = 2 phosphate + H(+). This Pongo abelii (Sumatran orangutan) protein is Inorganic pyrophosphatase (PPA1).